A 379-amino-acid polypeptide reads, in one-letter code: Queuine tRNA-ribosyltransferase (379 aa).

The active-site Proton acceptor is the aspartate 94. Residues 94–98 (DSGGF), aspartate 148, glutamine 191, and glycine 218 contribute to the substrate site. An RNA binding region spans residues 249–255 (GVGSPDS). Catalysis depends on aspartate 268, which acts as the Nucleophile. The segment at 273-277 (TRIAR) is RNA binding; important for wobble base 34 recognition. The Zn(2+) site is built by cysteine 306, cysteine 308, cysteine 311, and histidine 337.

The protein belongs to the queuine tRNA-ribosyltransferase family. In terms of assembly, homodimer. Within each dimer, one monomer is responsible for RNA recognition and catalysis, while the other monomer binds to the replacement base PreQ1. It depends on Zn(2+) as a cofactor.

The enzyme catalyses 7-aminomethyl-7-carbaguanine + guanosine(34) in tRNA = 7-aminomethyl-7-carbaguanosine(34) in tRNA + guanine. Its pathway is tRNA modification; tRNA-queuosine biosynthesis. Catalyzes the base-exchange of a guanine (G) residue with the queuine precursor 7-aminomethyl-7-deazaguanine (PreQ1) at position 34 (anticodon wobble position) in tRNAs with GU(N) anticodons (tRNA-Asp, -Asn, -His and -Tyr). Catalysis occurs through a double-displacement mechanism. The nucleophile active site attacks the C1' of nucleotide 34 to detach the guanine base from the RNA, forming a covalent enzyme-RNA intermediate. The proton acceptor active site deprotonates the incoming PreQ1, allowing a nucleophilic attack on the C1' of the ribose to form the product. After dissociation, two additional enzymatic reactions on the tRNA convert PreQ1 to queuine (Q), resulting in the hypermodified nucleoside queuosine (7-(((4,5-cis-dihydroxy-2-cyclopenten-1-yl)amino)methyl)-7-deazaguanosine). This Listeria innocua serovar 6a (strain ATCC BAA-680 / CLIP 11262) protein is Queuine tRNA-ribosyltransferase.